The chain runs to 283 residues: Peflin (283 aa).

Repeat copies occupy residues 21–30, 36–44, 45–54, 55–62, 71–79, 80–87, 88–95, and 96–104. Positions 21-104 are 8 X 9 AA approximate tandem repeat of [AP]-P-G-G-P-Y-G-G-P-P; the sequence is PQTNYYGGQQ…SQQHGSYGQG (84 aa). Over residues 37–70 the composition is skewed to low complexity; it reads PAASYGRPAPGAPYGSPPSGGVYGHPVPGSAAPG. The tract at residues 37-113 is disordered; it reads PAASYGRPAP…GAPAGNIPPG (77 aa). The span at 71 to 81 shows a compositional bias: gly residues; that stretch reads APGGPYGGQAP. Over residues 93 to 104 the composition is skewed to low complexity; that stretch reads YGSQQHGSYGQG. 5 consecutive EF-hand domains span residues 113–148, 154–179, 180–215, 216–252, and 253–282; these read GVDPEAFSWFQTVDTDHSGYISLKELKQALVNTNWS, TCTMMMNMFDKSNSGRIDMFGFSALW, RFIQQWRNLFQQYDRDRSGSINQGELHQALCQMGYQ, LSPQFVQIVMSRYAQRSAQPGLQLDRFIQICTQLQSM, and TEAFREKDTGQIGTAKLSYEDFITMTTTRL. Positions 126, 128, 130, 132, and 137 each coordinate Ca(2+). The Ca(2+) site is built by Asp-193, Asp-195, Ser-197, Ser-199, and Glu-204.

As to quaternary structure, heterodimer; heterodimerizes (via the EF-hand 5) with pdcd6.

The protein localises to the cytoplasm. It localises to the endoplasmic reticulum. The protein resides in the membrane. It is found in the cytoplasmic vesicle. Its subcellular location is the COPII-coated vesicle membrane. Its function is as follows. Calcium-binding protein that acts as an adapter that bridges unrelated proteins or stabilizes weak protein-protein complexes in response to calcium. Acts as a negative regulator of ER-Golgi transport. This is Peflin from Xenopus laevis (African clawed frog).